The primary structure comprises 746 residues: 1,4-alpha-glucan branching enzyme GlgB (746 aa).

Asp418 functions as the Nucleophile in the catalytic mechanism. Glu471 serves as the catalytic Proton donor.

It belongs to the glycosyl hydrolase 13 family. GlgB subfamily. As to quaternary structure, monomer.

The enzyme catalyses Transfers a segment of a (1-&gt;4)-alpha-D-glucan chain to a primary hydroxy group in a similar glucan chain.. Its pathway is glycan biosynthesis; glycogen biosynthesis. Its function is as follows. Catalyzes the formation of the alpha-1,6-glucosidic linkages in glycogen by scission of a 1,4-alpha-linked oligosaccharide from growing alpha-1,4-glucan chains and the subsequent attachment of the oligosaccharide to the alpha-1,6 position. The polypeptide is 1,4-alpha-glucan branching enzyme GlgB (Nitrosospira multiformis (strain ATCC 25196 / NCIMB 11849 / C 71)).